The sequence spans 1587 residues: Mediator of RNA polymerase II transcription subunit 23 (1587 aa).

Disordered stretches follow at residues 1374-1484 (SQSE…QLQH) and 1567-1587 (QHQQ…QQPH). A compositionally biased stretch (basic and acidic residues) spans 1385-1404 (PPEKEKSPEKEKEQEQEQHV). The tract at residues 1387–1404 (EKEKSPEKEKEQEQEQHV) is acidic. A compositionally biased stretch (polar residues) spans 1410-1426 (LESTPSVSSLPQMQHHL). Positions 1430–1450 (PLLPSHQMMPPPQQHSSSLQH) are enriched in low complexity. Over residues 1463–1484 (DTSQHQTIQQQSNHPTQQQLQH) the composition is skewed to polar residues. Positions 1567 to 1576 (QHQQYMQQQQ) are enriched in low complexity. Over residues 1577–1587 (QHHHQHQQQPH) the composition is skewed to basic residues.

The protein belongs to the Mediator complex subunit 23 family. As to quaternary structure, component of the Mediator complex. Interacts with let-19/mdt-13.

It localises to the nucleus. Functionally, component of the Mediator complex, a coactivator involved in regulated gene transcription of nearly all RNA polymerase II-dependent genes. Mediator functions as a bridge to convey information from gene-specific regulatory proteins to the basal RNA polymerase II transcription machinery. Mediator is recruited to promoters by direct interactions with regulatory proteins and serves as a scaffold for the assembly of a functional pre-initiation complex with RNA polymerase II and the general transcription factors. Functions downstream of receptor let-23 and let-60/Ras during vulval induction likely by down-regulating the expression of phosphatase dep-1 and lin-12/Notch in vulva precursor cell descendants with a primary cell fate. Acts to repress beta-catenin target genes. Required for asymmetric division of T-cells. Plays a role in responses to M.nematophilum-mediated bacterial infection by promoting tail swelling and preventing constipation. The sequence is that of Mediator of RNA polymerase II transcription subunit 23 (sur-2) from Caenorhabditis elegans.